Consider the following 542-residue polypeptide: Probable spastin homolog spas-1 (542 aa).

The stretch at Arg29–Glu66 forms a coiled coil. The segment at Ala131–Gln177 is disordered. Residues Gly135 to Ser169 are compositionally biased toward basic and acidic residues. Position 309–316 (Gly309–Thr316) interacts with ATP.

The protein belongs to the AAA ATPase family. Spastin subfamily. In terms of assembly, homohexamer. The homohexamer is stabilized by ATP-binding. The homohexamer may adopt a ring conformation through which microtubules pass prior to being severed. Interacts with microtubules.

The protein localises to the cytoplasm. Its subcellular location is the cytoskeleton. It is found in the perinuclear region. It catalyses the reaction n ATP + n H2O + a microtubule = n ADP + n phosphate + (n+1) alpha/beta tubulin heterodimers.. In terms of biological role, severs microtubules, probably in an ATP-dependent fashion. The polypeptide is Probable spastin homolog spas-1 (spas-1) (Caenorhabditis briggsae).